A 115-amino-acid chain; its full sequence is U3-lycotoxin-Ls1a (115 aa).

An N-terminal signal peptide occupies residues 1-20 (MKFVLLFGVLLVTLFSYSSA). Residues 21 to 44 (EMLDDFDQADEDELLSLIEKEEAR) constitute a propeptide that is removed on maturation. 4 cysteine pairs are disulfide-bonded: Cys-48/Cys-63, Cys-55/Cys-72, Cys-62/Cys-87, and Cys-74/Cys-85.

This sequence belongs to the neurotoxin 19 (CSTX) family. 01 subfamily. As to expression, expressed by the venom gland.

The protein localises to the secreted. This Lycosa singoriensis (Wolf spider) protein is U3-lycotoxin-Ls1a.